The primary structure comprises 480 residues: MSKKLYIKTWGCQMNEYDSQKMAELLDSTHGFSLVEEAEQADVILLNTCSIREKAQEKVFHQLGRWKNLKDKKPDLLIGVGGCVASQEGDSIRKRAPFVDMIFGPQTLHRLPEMLNQLQHSKSPIIDVSFPEIEKFDRLPEPKADGASAFVSIMEGCSKYCTFCVVPYTRGEEVSRPLDDVLYEIAQLAEQGVREVNLLGQNVNAYRGETHDGSICRFADLVRLVATIDGIDRIRYTTSHPVEFTDDIIEAYTDVPELVNHLHLPVQSGCDRILTQMKRGHTALEYKSQIRKLKKVRPELSMSSDFIIGFPGETDEDFTATMDLIKAVDFDLSFSFIYSARPGTPAADLPDDISDQTKKDRLKLLQEQITHQALRIARQMLNTEQRVLVEGPSRKNPMELRGKTENNRTVNFVAPHSVIGQFVDIKITDVVANSLRGELVREEKEMGLRIAHSPADILANNHHMATPSNLDELGVGTFTP.

Residues 3–120 enclose the MTTase N-terminal domain; it reads KKLYIKTWGC…LPEMLNQLQH (118 aa). Residues Cys12, Cys49, Cys83, Cys157, Cys161, and Cys164 each contribute to the [4Fe-4S] cluster site. One can recognise a Radical SAM core domain in the interval 143–375; it reads KADGASAFVS…QEQITHQALR (233 aa). In terms of domain architecture, TRAM spans 378–441; it reads RQMLNTEQRV…ANSLRGELVR (64 aa).

This sequence belongs to the methylthiotransferase family. MiaB subfamily. Monomer. It depends on [4Fe-4S] cluster as a cofactor.

It is found in the cytoplasm. The enzyme catalyses N(6)-dimethylallyladenosine(37) in tRNA + (sulfur carrier)-SH + AH2 + 2 S-adenosyl-L-methionine = 2-methylsulfanyl-N(6)-dimethylallyladenosine(37) in tRNA + (sulfur carrier)-H + 5'-deoxyadenosine + L-methionine + A + S-adenosyl-L-homocysteine + 2 H(+). Its function is as follows. Catalyzes the methylthiolation of N6-(dimethylallyl)adenosine (i(6)A), leading to the formation of 2-methylthio-N6-(dimethylallyl)adenosine (ms(2)i(6)A) at position 37 in tRNAs that read codons beginning with uridine. This chain is tRNA-2-methylthio-N(6)-dimethylallyladenosine synthase, found in Colwellia psychrerythraea (strain 34H / ATCC BAA-681) (Vibrio psychroerythus).